We begin with the raw amino-acid sequence, 317 residues long: Ribosomal lysine N-methyltransferase 5 (317 aa).

S-adenosyl-L-methionine contacts are provided by residues W87, 141–143 (GSG), D163, W214, and L237.

It belongs to the class I-like SAM-binding methyltransferase superfamily. RKM5 family.

Its function is as follows. S-adenosyl-L-methionine-dependent protein-lysine N-methyltransferase that methylates 60S ribosomal protein L1. In Eremothecium gossypii (strain ATCC 10895 / CBS 109.51 / FGSC 9923 / NRRL Y-1056) (Yeast), this protein is Ribosomal lysine N-methyltransferase 5 (RKM5).